A 297-amino-acid polypeptide reads, in one-letter code: Coatomer subunit epsilon-2 (297 aa).

Belongs to the COPE family. As to quaternary structure, oligomeric complex that consists of at least the alpha, beta, beta', gamma, delta, epsilon and zeta subunits.

The protein resides in the cytoplasm. It localises to the golgi apparatus membrane. The protein localises to the cytoplasmic vesicle. It is found in the COPI-coated vesicle membrane. The coatomer is a cytosolic protein complex that binds to dilysine motifs and reversibly associates with Golgi non-clathrin-coated vesicles, which further mediate biosynthetic protein transport from the ER, via the Golgi up to the trans Golgi network. The coatomer complex is required for budding from Golgi membranes, and is essential for the retrograde Golgi-to-ER transport of dilysine-tagged proteins. In Oryza sativa subsp. indica (Rice), this protein is Coatomer subunit epsilon-2.